Consider the following 331-residue polypeptide: UPF0324 membrane protein SAS0317 (331 aa).

Transmembrane regions (helical) follow at residues 9-26, 31-48, 69-88, 93-115, 122-144, 154-176, 183-202, 217-234, 247-269, 273-295, and 308-330; these read FMIG…SFLA, ILDK…AILY, LLRF…DIIG, LLAI…NKLL, ALLL…APIF, SIGI…YAIF, YGAW…LAGG, LGRV…ILIM, ISIP…VTIP, LNIL…GLNV, and LMTI…HWLY.

The protein belongs to the UPF0324 family.

It localises to the cell membrane. This is UPF0324 membrane protein SAS0317 from Staphylococcus aureus (strain MSSA476).